The primary structure comprises 86 residues: Small ribosomal subunit protein bS20 (86 aa).

The tract at residues 1-27 (MANSKSAKKRAIQAEKRRQHNASRRSM) is disordered.

Belongs to the bacterial ribosomal protein bS20 family.

Functionally, binds directly to 16S ribosomal RNA. The polypeptide is Small ribosomal subunit protein bS20 (Vibrio atlanticus (strain LGP32) (Vibrio splendidus (strain Mel32))).